The following is a 174-amino-acid chain: MGRLVFNYRKAMREPKKIQQLTENYSLPFAVELIPAINYFIFVGLCFGFWYGVRMIFPHAFDNSYVIVIFGIPFFLTMLVTKIKPEGKNIYIYFFDFAKYYFFIKLPQKKYCNDRKIDLSNEKQIEFRKLVKVVDYSNETKNAYEGNTQEFAVNKNGRRVGVLPNKKQFDSYAK.

2 helical membrane-spanning segments follow: residues 29-51 and 66-83; these read FAVE…GFWY and VIVI…VTKI.

The protein localises to the cell membrane. This is an uncharacterized protein from Bacillus subtilis (strain 168).